Reading from the N-terminus, the 336-residue chain is Phenylalanine--tRNA ligase alpha subunit (336 aa).

Residue Glu255 participates in Mg(2+) binding.

It belongs to the class-II aminoacyl-tRNA synthetase family. Phe-tRNA synthetase alpha subunit type 1 subfamily. Tetramer of two alpha and two beta subunits. Mg(2+) serves as cofactor.

It is found in the cytoplasm. It carries out the reaction tRNA(Phe) + L-phenylalanine + ATP = L-phenylalanyl-tRNA(Phe) + AMP + diphosphate + H(+). The polypeptide is Phenylalanine--tRNA ligase alpha subunit (Gemmatimonas aurantiaca (strain DSM 14586 / JCM 11422 / NBRC 100505 / T-27)).